A 259-amino-acid chain; its full sequence is 5'-nucleotidase SurE (259 aa).

The a divalent metal cation site is built by Asp-8, Asp-9, Ser-40, and Asn-92.

It belongs to the SurE nucleotidase family. A divalent metal cation serves as cofactor.

The protein localises to the cytoplasm. It carries out the reaction a ribonucleoside 5'-phosphate + H2O = a ribonucleoside + phosphate. Its function is as follows. Nucleotidase that shows phosphatase activity on nucleoside 5'-monophosphates. The sequence is that of 5'-nucleotidase SurE from Xanthomonas campestris pv. campestris (strain 8004).